Reading from the N-terminus, the 430-residue chain is MKLQKPKGTADLLPAETAKWQYIEEIARGVFNDYNFKEIRTPMFESYELFSRATGETSDIVTKEMYDFEDKGGRHIALRPEGTASAVRAYIENKLYAPEVVKPVKLWYDAPMFRYERPQSGRLRQFHQFGVECLGLKNSAVDVEIIAMADTLFRQLGISGVKLSLNTLGDMESRKAYRQALIDYLTPFENQLSEDSRRRLNENPLRVLDSKEAEDIAIVKNAPAILDYLNETSKAYFEEVKALLEALNIEYTIDSNMVRGLDYYNDTIFEFIVNFDGKELTVCGGGRYDGLVEYFDGPATPAFGFGLGIERLLMIAEKQEINFIPEETLDVYIAVMGEKANLEATKLAESLREQAFKVERDFSNRKLGAQFKTAEKLGAELIITLGEDEVRTGQIKVKHNQTRKQVETTLKAVHESFAPIFEEIYADEIN.

Belongs to the class-II aminoacyl-tRNA synthetase family. Homodimer.

The protein resides in the cytoplasm. The enzyme catalyses tRNA(His) + L-histidine + ATP = L-histidyl-tRNA(His) + AMP + diphosphate + H(+). The sequence is that of Histidine--tRNA ligase from Lactococcus lactis subsp. cremoris (strain SK11).